Consider the following 97-residue polypeptide: DNA-directed RNA polymerase subunit omega (97 aa).

This sequence belongs to the RNA polymerase subunit omega family. As to quaternary structure, the RNAP catalytic core consists of 2 alpha, 1 beta, 1 beta' and 1 omega subunit. When a sigma factor is associated with the core the holoenzyme is formed, which can initiate transcription.

The catalysed reaction is RNA(n) + a ribonucleoside 5'-triphosphate = RNA(n+1) + diphosphate. Its function is as follows. Promotes RNA polymerase assembly. Latches the N- and C-terminal regions of the beta' subunit thereby facilitating its interaction with the beta and alpha subunits. This is DNA-directed RNA polymerase subunit omega from Corynebacterium glutamicum (strain ATCC 13032 / DSM 20300 / JCM 1318 / BCRC 11384 / CCUG 27702 / LMG 3730 / NBRC 12168 / NCIMB 10025 / NRRL B-2784 / 534).